The primary structure comprises 79 residues: Cytochrome c oxidase subunit 7A1, mitochondrial (79 aa).

The transit peptide at 1 to 21 (MQALRVSRALIRSFNTTARNR) directs the protein to the mitochondrion. Residues 22–46 (FQNRVPEKQKLFQEDNDIPLYLKGG) lie on the Mitochondrial matrix side of the membrane. A helical membrane pass occupies residues 47-75 (IVDNILYRVTMGLCLGGSAYSMYCLGWAS). Residues 76 to 79 (FPRN) are Mitochondrial intermembrane-facing.

This sequence belongs to the cytochrome c oxidase VIIa family. Component of the complex IV (CIV, cytochrome c oxidase), a multisubunit enzyme composed of 14 subunits. The complex is composed of a catalytic core of 3 subunits MT-CO1, MT-CO2 and MT-CO3, encoded in the mitochondrial DNA, and 11 supernumerary subunits COX4I1 (or COX4I2), COX5A, COX5B, COX6A2 (or COX6A1), COX6B1 (or COX6B2), COX6C, COX7A1 (or COX7A2), COX7B, COX7C, COX8B and NDUFA4, which are encoded in the nuclear genome. The complex exists as a monomer or a dimer and forms supercomplexes (SCs) in the inner mitochondrial membrane with NADH-ubiquinone oxidoreductase (complex I, CI) and ubiquinol-cytochrome c oxidoreductase (cytochrome b-c1 complex, complex III, CIII), resulting in different assemblies (supercomplex SCI(1)III(2)IV(1) and megacomplex MCI(2)III(2)IV(2)).

It localises to the mitochondrion inner membrane. Its pathway is energy metabolism; oxidative phosphorylation. In terms of biological role, component of the mitochondrial respiratory complex IV (CIV, also named cytochrome c oxidase complex), the last enzyme in the mitochondrial electron transport chain which drives oxidative phosphorylation. The CIV complex is the component of the respiratory chain that catalyzes the reduction of oxygen to water. Acts as an assembly factor that specifically drives the homodimerization of CIV complexes, mediating the formation of mitochondrial respiratory supercomplexes (respirasomes) containing two CIV: supercomplxes with two molecules of CIV show improved activity. Despite being highly expressed in brown adipose tissue, not required for thermogenesis. The chain is Cytochrome c oxidase subunit 7A1, mitochondrial (COX7A1) from Trachypithecus cristatus (Silvered leaf-monkey).